The sequence spans 287 residues: Ribosomal RNA small subunit methyltransferase A (287 aa).

N28, L30, G55, E77, D103, and N123 together coordinate S-adenosyl-L-methionine.

This sequence belongs to the class I-like SAM-binding methyltransferase superfamily. rRNA adenine N(6)-methyltransferase family. RsmA subfamily.

Its subcellular location is the cytoplasm. It carries out the reaction adenosine(1518)/adenosine(1519) in 16S rRNA + 4 S-adenosyl-L-methionine = N(6)-dimethyladenosine(1518)/N(6)-dimethyladenosine(1519) in 16S rRNA + 4 S-adenosyl-L-homocysteine + 4 H(+). In terms of biological role, specifically dimethylates two adjacent adenosines (A1518 and A1519) in the loop of a conserved hairpin near the 3'-end of 16S rRNA in the 30S particle. May play a critical role in biogenesis of 30S subunits. The protein is Ribosomal RNA small subunit methyltransferase A of Nitrobacter winogradskyi (strain ATCC 25391 / DSM 10237 / CIP 104748 / NCIMB 11846 / Nb-255).